The sequence spans 112 residues: Putative pterin-4-alpha-carbinolamine dehydratase (112 aa).

It belongs to the pterin-4-alpha-carbinolamine dehydratase family.

The enzyme catalyses (4aS,6R)-4a-hydroxy-L-erythro-5,6,7,8-tetrahydrobiopterin = (6R)-L-erythro-6,7-dihydrobiopterin + H2O. This chain is Putative pterin-4-alpha-carbinolamine dehydratase, found in Shewanella loihica (strain ATCC BAA-1088 / PV-4).